A 270-amino-acid chain; its full sequence is tRNA pseudouridine synthase A (270 aa).

Aspartate 51 acts as the Nucleophile in catalysis. Substrate is bound at residue tyrosine 109.

The protein belongs to the tRNA pseudouridine synthase TruA family. As to quaternary structure, homodimer.

The catalysed reaction is uridine(38/39/40) in tRNA = pseudouridine(38/39/40) in tRNA. Formation of pseudouridine at positions 38, 39 and 40 in the anticodon stem and loop of transfer RNAs. This Variovorax paradoxus (strain S110) protein is tRNA pseudouridine synthase A.